Consider the following 462-residue polypeptide: uncharacterized protein (462 aa).

7 WD repeats span residues 170–209 (GGER…EVQL), 212–260 (GHTD…PLLR), 263–302 (GHLA…ELLM), 305–344 (GHSE…SIMV), 347–386 (EHIR…LAHT), 389–430 (AHSS…LIKS), and 433–462 (GHEE…LWYP).

It is found in the cytoplasm. This is an uncharacterized protein from Schizosaccharomyces pombe (strain 972 / ATCC 24843) (Fission yeast).